The primary structure comprises 910 residues: Short transient receptor potential channel 3 (910 aa).

The tract at residues 1–93 (MSTKVKKCRE…VRGPAFMFGA (93 aa)) is disordered. The Cytoplasmic portion of the chain corresponds to 1-448 (MSTKVKKCRE…KILRSPFMKF (448 aa)). Over residues 19-29 (PEEEEDGEAEG) the composition is skewed to acidic residues. A compositionally biased stretch (pro residues) spans 48–58 (PPCPRAPPSPG). Over residues 59-68 (PDASSEGSPS) the composition is skewed to low complexity. 4 ANK repeats span residues 100–129 (AEEERFLDAAEYGNIPVVRKMLEESRTLNV), 135–164 (MGQNALQLAVGNEHLEVTELLLKKENLARI), 166–192 (DALLLAISKGYVRIVEAILGHPGFAAS), and 221–250 (PDITPIILAAHCHKYEVVHLLLLKGARIER). Glu147 provides a ligand contact to Ca(2+). Residues 449–466 (VAHAASFIIFLGLLVFNA) traverse the membrane as a helical segment. Topologically, residues 467 to 497 (SDRFEGITTLPNITVIDYPKQIFRVKTTQFT) are extracellular. Asn478 carries an N-linked (GlcNAc...) asparagine glycan. A helical membrane pass occupies residues 498–516 (WTEMLIMVWVLGMMWSECK). Residues Glu514, Glu517, and Asn532 each contribute to the Ca(2+) site. Residues 517–529 (ELWLEGPREYIVQ) are Cytoplasmic-facing. Residues 530-551 (LWNVLDFGMLSIFIAAFTARFL) form a helical membrane-spanning segment. Topologically, residues 552-595 (AFLQATKAQQYVDSHVQESDLSEVTLPPEVQYFTYARDKWLPSD) are extracellular. Residues 596 to 619 (PQIISEGLYAIAVVLSFSRIAYIL) form a helical membrane-spanning segment. The Cytoplasmic portion of the chain corresponds to 620 to 638 (PANESFGPLQISLGRTVKD). An ANK 5 repeat occupies 623–652 (ESFGPLQISLGRTVKDIFKFMVLFIMVFLA). A helical transmembrane segment spans residues 639 to 662 (IFKFMVLFIMVFLAFMIGMFILYS). The Extracellular segment spans residues 663–702 (YYLGAKVNPAFTTVEESFKTLFWSIFGLSEVTSVVLKYDH). The helical transmembrane segment at 703-728 (KFIENIGYVLYGIYNVTMVVVLLNML) threads the bilayer. The Cytoplasmic portion of the chain corresponds to 729 to 910 (IAMINSSYQE…KLNPSVLRCE (182 aa)). Residues Glu860, Glu863, Glu865, and Asp872 each contribute to the Ca(2+) site.

This sequence belongs to the transient receptor (TC 1.A.4) family. STrpC subfamily. TRPC3 sub-subfamily. Homotetramer. Interacts with ITPR1, ITPR3, MX1 and RNF24. Interacts with JPH2; the interaction is involved in maintaining Ca(2+) homeostasis in skeletal muscle and is mediated by JPH2 'Ser-165' phosphorylation. In terms of tissue distribution, abundantly expressed in brain. Concentrated in cerebellar Purkinje cells and sparsely localized in cerebellar granule lyer, pontine nuclei and thalamus. Lower levels detected in other tissues.

It is found in the cell membrane. The catalysed reaction is Ca(2+)(in) = Ca(2+)(out). With respect to regulation, activated by diacylglycerol (DAG) in a membrane-delimited fashion, independently of protein kinase C. Activated by inositol 1,4,5-triphosphate receptors (ITPR) with bound IP3. May be activated by internal calcium store depletion. Inhibited by intracellular Ca(2+). In terms of biological role, forms a receptor-activated non-selective calcium permeant cation channel. May be operated by a phosphatidylinositol second messenger system activated by receptor tyrosine kinases or G-protein coupled receptors. This Mus musculus (Mouse) protein is Short transient receptor potential channel 3 (Trpc3).